A 100-amino-acid chain; its full sequence is Serine protease inhibitor 1 protein (100 aa).

The N-terminal stretch at M1–C20 is a signal peptide. Cystine bridges form between C42–C74, C51–C69, C54–C65, C58–C93, and C76–C90. Positions C42–C93 constitute a TIL domain.

The protein resides in the secreted. The sequence is that of Serine protease inhibitor 1 protein from Caenorhabditis elegans.